We begin with the raw amino-acid sequence, 297 residues long: tRNA (guanine-N(7)-)-methyltransferase (297 aa).

4 residues coordinate S-adenosyl-L-methionine: E22, E47, D74, and D97. Residue D97 is part of the active site. Substrate is bound by residues K101, D133, and 165–168 (TKYE).

Belongs to the class I-like SAM-binding methyltransferase superfamily. TrmB family.

The enzyme catalyses guanosine(46) in tRNA + S-adenosyl-L-methionine = N(7)-methylguanosine(46) in tRNA + S-adenosyl-L-homocysteine. Its pathway is tRNA modification; N(7)-methylguanine-tRNA biosynthesis. Catalyzes the formation of N(7)-methylguanine at position 46 (m7G46) in tRNA. This Aquifex aeolicus (strain VF5) protein is tRNA (guanine-N(7)-)-methyltransferase.